Here is a 391-residue protein sequence, read N- to C-terminus: Large ribosomal subunit protein uL3 (391 aa).

Residues 1–10 (MSHRKFEAPR) show a composition bias toward basic and acidic residues. Positions 1-41 (MSHRKFEAPRHGSLGFRPRRRTRHHRGRCRSFPKDDPSKKP) are disordered. The segment covering 17 to 31 (RPRRRTRHHRGRCRS) has biased composition (basic residues).

Belongs to the universal ribosomal protein uL3 family.

The protein localises to the cytoplasm. Its function is as follows. The L3 protein is a component of the large subunit of cytoplasmic ribosomes. The sequence is that of Large ribosomal subunit protein uL3 (RPL3) from Tetrahymena thermophila.